The primary structure comprises 358 residues: 2'-5'-oligoadenylate synthase 1A (358 aa).

Residues 14-61 (DKFIEVYLLPNTSFRDDVKSAINVLCDFLKERCFRDTVHPVRVSKVVK) are interaction with dsRNA. Residue S64 coordinates ATP. D76, D78, and D149 together coordinate Mg(2+). The segment at 201 to 211 (QRPTKLKSLIR) is interaction with dsRNA. Positions 211, 214, and 231 each coordinate ATP.

It belongs to the 2-5A synthase family. In terms of assembly, monomer. Homotetramer. Interacts with OAS1D. The cofactor is Mg(2+).

The protein resides in the cytoplasm. It localises to the mitochondrion. It is found in the nucleus. Its subcellular location is the microsome. The protein localises to the endoplasmic reticulum. It carries out the reaction 3 ATP = 5'-triphosphoadenylyl-(2'-&gt;5')-adenylyl-(2'-&gt;5')-adenosine + 2 diphosphate. With respect to regulation, produced as a latent enzyme which is activated by dsRNA generated during the course of viral infection. The dsRNA activator must be at least 15 nucleotides long, and no modification of the 2'-hydroxyl group is tolerated. ssRNA or dsDNA do not act as activators. Its function is as follows. Interferon-induced, dsRNA-activated antiviral enzyme which plays a critical role in cellular innate antiviral response. In addition, it may also play a role in other cellular processes such as apoptosis, cell growth, differentiation and gene regulation. Synthesizes higher oligomers of 2'-5'-oligoadenylates (2-5A) from ATP which then bind to the inactive monomeric form of ribonuclease L (RNase L) leading to its dimerization and subsequent activation. Activation of RNase L leads to degradation of cellular as well as viral RNA, resulting in the inhibition of protein synthesis, thus terminating viral replication. Can mediate the antiviral effect via the classical RNase L-dependent pathway or an alternative antiviral pathway independent of RNase L. The chain is 2'-5'-oligoadenylate synthase 1A (Oas1a) from Rattus norvegicus (Rat).